The chain runs to 313 residues: N-acetyl-gamma-glutamyl-phosphate reductase (313 aa).

The active site involves Cys-117.

Belongs to the NAGSA dehydrogenase family. Type 2 subfamily.

It localises to the cytoplasm. It carries out the reaction N-acetyl-L-glutamate 5-semialdehyde + phosphate + NADP(+) = N-acetyl-L-glutamyl 5-phosphate + NADPH + H(+). It participates in amino-acid biosynthesis; L-arginine biosynthesis; N(2)-acetyl-L-ornithine from L-glutamate: step 3/4. Its function is as follows. Catalyzes the NADPH-dependent reduction of N-acetyl-5-glutamyl phosphate to yield N-acetyl-L-glutamate 5-semialdehyde. This Burkholderia orbicola (strain MC0-3) protein is N-acetyl-gamma-glutamyl-phosphate reductase.